A 122-amino-acid chain; its full sequence is Large ribosomal subunit protein uL14 (122 aa).

Belongs to the universal ribosomal protein uL14 family. In terms of assembly, part of the 50S ribosomal subunit. Forms a cluster with proteins L3 and L19. In the 70S ribosome, L14 and L19 interact and together make contacts with the 16S rRNA in bridges B5 and B8.

Binds to 23S rRNA. Forms part of two intersubunit bridges in the 70S ribosome. This chain is Large ribosomal subunit protein uL14, found in Chromobacterium violaceum (strain ATCC 12472 / DSM 30191 / JCM 1249 / CCUG 213 / NBRC 12614 / NCIMB 9131 / NCTC 9757 / MK).